A 400-amino-acid chain; its full sequence is Phosphoglycerate kinase (400 aa).

Residues 24–26 (DFN), Arg40, 63–66 (HFGR), Arg121, and Arg154 each bind substrate. ATP contacts are provided by residues Lys205, Gly296, Glu327, and 356–359 (GGDS).

This sequence belongs to the phosphoglycerate kinase family. In terms of assembly, monomer.

It is found in the cytoplasm. The enzyme catalyses (2R)-3-phosphoglycerate + ATP = (2R)-3-phospho-glyceroyl phosphate + ADP. Its pathway is carbohydrate degradation; glycolysis; pyruvate from D-glyceraldehyde 3-phosphate: step 2/5. In Nostoc punctiforme (strain ATCC 29133 / PCC 73102), this protein is Phosphoglycerate kinase.